Reading from the N-terminus, the 488-residue chain is Probable glycine dehydrogenase (decarboxylating) subunit 2 (488 aa).

K264 carries the N6-(pyridoxal phosphate)lysine modification.

It belongs to the GcvP family. C-terminal subunit subfamily. As to quaternary structure, the glycine cleavage system is composed of four proteins: P, T, L and H. In this organism, the P 'protein' is a heterodimer of two subunits. The cofactor is pyridoxal 5'-phosphate.

The catalysed reaction is N(6)-[(R)-lipoyl]-L-lysyl-[glycine-cleavage complex H protein] + glycine + H(+) = N(6)-[(R)-S(8)-aminomethyldihydrolipoyl]-L-lysyl-[glycine-cleavage complex H protein] + CO2. The glycine cleavage system catalyzes the degradation of glycine. The P protein binds the alpha-amino group of glycine through its pyridoxal phosphate cofactor; CO(2) is released and the remaining methylamine moiety is then transferred to the lipoamide cofactor of the H protein. This Methylococcus capsulatus (strain ATCC 33009 / NCIMB 11132 / Bath) protein is Probable glycine dehydrogenase (decarboxylating) subunit 2.